Reading from the N-terminus, the 535-residue chain is Probable cytochrome P450 12b2, mitochondrial (535 aa).

Cys479 is a binding site for heme.

It belongs to the cytochrome P450 family. Requires heme as cofactor.

Its subcellular location is the mitochondrion membrane. This is Probable cytochrome P450 12b2, mitochondrial (Cyp12b2) from Drosophila melanogaster (Fruit fly).